Reading from the N-terminus, the 365-residue chain is tRNA/tmRNA (uracil-C(5))-methyltransferase (365 aa).

Positions 189, 217, 222, 238, and 298 each coordinate S-adenosyl-L-methionine. C323 (nucleophile) is an active-site residue. The Proton acceptor role is filled by E357.

It belongs to the class I-like SAM-binding methyltransferase superfamily. RNA M5U methyltransferase family. TrmA subfamily.

It carries out the reaction uridine(54) in tRNA + S-adenosyl-L-methionine = 5-methyluridine(54) in tRNA + S-adenosyl-L-homocysteine + H(+). The catalysed reaction is uridine(341) in tmRNA + S-adenosyl-L-methionine = 5-methyluridine(341) in tmRNA + S-adenosyl-L-homocysteine + H(+). Functionally, dual-specificity methyltransferase that catalyzes the formation of 5-methyluridine at position 54 (m5U54) in all tRNAs, and that of position 341 (m5U341) in tmRNA (transfer-mRNA). The chain is tRNA/tmRNA (uracil-C(5))-methyltransferase from Pasteurella multocida (strain Pm70).